The chain runs to 434 residues: Zinc finger protein kipf (434 aa).

The 82-residue stretch at 7–88 (NVCRTCMDET…EQSYQHFFRV (82 aa)) folds into the ZAD domain. Zn(2+)-binding residues include C9, C12, C61, and C64. The segment at 117 to 173 (QLKSDRQQDTQQMTKTQKPDDDLSQKQTLQAKLQEGNIDGPPESFTLHPRKRTCRTE) is disordered. The segment at 197-219 (YNCPHCSKRFCSQTQLRTHITDL) adopts a C2H2-type 1; degenerate zinc-finger fold. 3 C2H2-type zinc fingers span residues 221–243 (NRCPYCPRTYMQKSNLKRHLRNH), 249–271 (HKCFHCSKAFMRKDHLKRHLRTH), and 277–299 (LSCSQCSAVFIEHVQLEIHRREH). Positions 295–328 (HRREHKQRPGSSKSESTKDPDSDDSDQAQDLKPK) are disordered. 2 positions are modified to phosphoserine: S316 and S319. C2H2-type zinc fingers lie at residues 348-370 (PICDICQKKFSSVYALKRHMLTH), 377-399 (KKCTYCSEEFKTEKHLKRHERGH), and 404-427 (FRCEFCSLVFVDVNYLRKHKKRIH).

Homodimer; mediated by the ZAD domain. Interacts (via C2H2 type zinc finger 4) with rhi/rhino (via Chromo domain). Dimerization is required for association with DNA and interaction with rhi/rhino. Primarily expressed in ovaries and absent from testes. In ovaries very low levels in germline stem cells and cystoblasts but abundant in developing cysts and polyploid nurse cells.

The protein resides in the nucleus. Its subcellular location is the chromosome. Its function is as follows. DNA-binding zinc finger protein that recruits chromo domain protein rhino/rhi to specific chromatin regions enriched in H3K9me2/3 histone methylation, mediating piRNA (piwi-interacting RNA) biogenesis. May bind to GC rich DNA sequences including a 5'-GRGGN-3' sequence motif. Nucleates rhi/rhino accumulation and stabilizes its expansion. Involved in piRNA transposon repression, particularly in the female ovary during oogenesis. The polypeptide is Zinc finger protein kipf (Drosophila melanogaster (Fruit fly)).